The chain runs to 77 residues: Small ribosomal subunit protein bS18 (77 aa).

Belongs to the bacterial ribosomal protein bS18 family. In terms of assembly, part of the 30S ribosomal subunit. Forms a tight heterodimer with protein bS6.

Binds as a heterodimer with protein bS6 to the central domain of the 16S rRNA, where it helps stabilize the platform of the 30S subunit. This Halalkalibacterium halodurans (strain ATCC BAA-125 / DSM 18197 / FERM 7344 / JCM 9153 / C-125) (Bacillus halodurans) protein is Small ribosomal subunit protein bS18.